A 130-amino-acid chain; its full sequence is S-protein homolog 32 (130 aa).

The N-terminal stretch at 1 to 21 is a signal peptide; the sequence is MKYFTIFVFVFSLCMLGHVSG.

This sequence belongs to the plant self-incompatibility (S1) protein family.

Its subcellular location is the secreted. The chain is S-protein homolog 32 from Arabidopsis thaliana (Mouse-ear cress).